The sequence spans 644 residues: Alkyldihydroxyacetonephosphate synthase, peroxisomal (644 aa).

The N-terminal 44 residues, 1 to 44, are a transit peptide targeting the peroxisome; the sequence is MAEAAGEAGASERDPDAVRARRRLRVLSGHLLGRPQEAPSTNEC. A disordered region spans residues 1–70; the sequence is MAEAAGEAGA…PAAPESGTIP (70 aa). Residues 10–19 show a composition bias toward basic and acidic residues; it reads ASERDPDAVR. Residues 49–64 show a composition bias toward low complexity; the sequence is AASAAGASPAASPAAP. Phosphoserine is present on residues serine 51 and serine 56. N6-acetyllysine is present on lysine 88. Residues 188-370 form the FAD-binding PCMH-type domain; that stretch reads FERIPDIVVW…TEATIKIRPT (183 aa). Residues 220–226, 289–295, and 302–305 each bind FAD; these read PIGGGTS, DSLEFSI, and TRAS. Lysine 333 carries the post-translational modification N6-acetyllysine. 354 to 360 is a binding site for FAD; it reads EGTLGVI. Arginine 501 provides a ligand contact to substrate. Tyrosine 564 (proton donor/acceptor) is an active-site residue. Important for enzyme activity stretches follow at residues 601–603 and 640–644; these read HHH and NRNLL.

This sequence belongs to the FAD-binding oxidoreductase/transferase type 4 family. Homodimer. The cofactor is FAD.

The protein localises to the peroxisome membrane. Its subcellular location is the peroxisome. It catalyses the reaction a long chain fatty alcohol + a 1-acylglycerone 3-phosphate = a 1-O-alkylglycerone 3-phosphate + a long-chain fatty acid + H(+). The enzyme catalyses hexadecan-1-ol + 1-hexadecanoylglycerone 3-phosphate = 1-O-hexadecylglycerone 3-phosphate + hexadecanoate + H(+). It carries out the reaction 1-hexadecanoylglycerone 3-phosphate + a long-chain fatty acid = a 1-acylglycerone 3-phosphate + hexadecanoate. It functions in the pathway glycerolipid metabolism; ether lipid biosynthesis. Inhibited by divalent cation Mg(2+). In terms of biological role, catalyzes the exchange of the acyl chain in acyl-dihydroxyacetonephosphate (acyl-DHAP) for a long chain fatty alcohol, yielding the first ether linked intermediate, i.e. alkyl-dihydroxyacetonephosphate (alkyl-DHAP), in the pathway of ether lipid biosynthesis. The polypeptide is Alkyldihydroxyacetonephosphate synthase, peroxisomal (Agps) (Rattus norvegicus (Rat)).